We begin with the raw amino-acid sequence, 208 residues long: NAD(P)H-hydrate epimerase (208 aa).

In terms of domain architecture, YjeF N-terminal spans 10-208 (IRDAERQTLA…TLGVIMTPAN (199 aa)). 54–58 (NNGGD) provides a ligand contact to (6S)-NADPHX. K(+) contacts are provided by N55 and D117. (6S)-NADPHX contacts are provided by residues 121–127 (GIGLNRP) and D150. S153 lines the K(+) pocket.

It belongs to the NnrE/AIBP family. The cofactor is K(+).

The enzyme catalyses (6R)-NADHX = (6S)-NADHX. It catalyses the reaction (6R)-NADPHX = (6S)-NADPHX. Functionally, catalyzes the epimerization of the S- and R-forms of NAD(P)HX, a damaged form of NAD(P)H that is a result of enzymatic or heat-dependent hydration. This is a prerequisite for the S-specific NAD(P)H-hydrate dehydratase to allow the repair of both epimers of NAD(P)HX. The chain is NAD(P)H-hydrate epimerase from Achromobacter xylosoxidans (strain A8).